A 239-amino-acid chain; its full sequence is Purine nucleoside phosphorylase DeoD-type (239 aa).

His-5 lines the a purine D-ribonucleoside pocket. Positions 21 and 25 each coordinate phosphate. Lys-27 is subject to N6-acetyllysine. Phosphate-binding positions include Arg-44 and 88 to 91 (RVGS). A purine D-ribonucleoside-binding positions include 180–182 (EME) and 204–205 (SD). Residue Asp-205 is the Proton donor of the active site.

It belongs to the PNP/UDP phosphorylase family. Homohexamer; trimer of homodimers.

It carries out the reaction a purine D-ribonucleoside + phosphate = a purine nucleobase + alpha-D-ribose 1-phosphate. The catalysed reaction is a purine 2'-deoxy-D-ribonucleoside + phosphate = a purine nucleobase + 2-deoxy-alpha-D-ribose 1-phosphate. Catalyzes the reversible phosphorolytic breakdown of the N-glycosidic bond in the beta-(deoxy)ribonucleoside molecules, with the formation of the corresponding free purine bases and pentose-1-phosphate. The chain is Purine nucleoside phosphorylase DeoD-type from Escherichia coli O81 (strain ED1a).